A 65-amino-acid polypeptide reads, in one-letter code: Muscarinic toxin-like protein 1 (65 aa).

4 cysteine pairs are disulfide-bonded: C3/C24, C17/C42, C46/C57, and C58/C63.

Belongs to the three-finger toxin family. Short-chain subfamily. Type C muscarinic toxin sub-subfamily. As to quaternary structure, monomer. As to expression, expressed by the venom gland.

It is found in the secreted. Binds weakly to the muscarinic acetylcholine receptor (CHRM). This Naja kaouthia (Monocled cobra) protein is Muscarinic toxin-like protein 1.